We begin with the raw amino-acid sequence, 784 residues long: LPS-assembly protein LptD (784 aa).

The N-terminal stretch at 1–24 (MKKRIPTLLATMIATALYSQQGLA) is a signal peptide. 2 disulfides stabilise this stretch: Cys31-Cys724 and Cys173-Cys725.

The protein belongs to the LptD family. As to quaternary structure, component of the lipopolysaccharide transport and assembly complex. Interacts with LptE and LptA. Post-translationally, contains two intramolecular disulfide bonds.

It is found in the cell outer membrane. Functionally, together with LptE, is involved in the assembly of lipopolysaccharide (LPS) at the surface of the outer membrane. The protein is LPS-assembly protein LptD of Escherichia coli O1:K1 / APEC.